A 488-amino-acid chain; its full sequence is Protein nucleotidyltransferase YdiU (488 aa).

Residues glycine 91, glycine 93, arginine 94, lysine 114, aspartate 126, glycine 127, arginine 177, and arginine 184 each contribute to the ATP site. Catalysis depends on aspartate 253, which acts as the Proton acceptor. Mg(2+) contacts are provided by asparagine 254 and aspartate 263. An ATP-binding site is contributed by aspartate 263.

This sequence belongs to the SELO family. Requires Mg(2+) as cofactor. Mn(2+) is required as a cofactor.

The catalysed reaction is L-seryl-[protein] + ATP = 3-O-(5'-adenylyl)-L-seryl-[protein] + diphosphate. It catalyses the reaction L-threonyl-[protein] + ATP = 3-O-(5'-adenylyl)-L-threonyl-[protein] + diphosphate. The enzyme catalyses L-tyrosyl-[protein] + ATP = O-(5'-adenylyl)-L-tyrosyl-[protein] + diphosphate. It carries out the reaction L-histidyl-[protein] + UTP = N(tele)-(5'-uridylyl)-L-histidyl-[protein] + diphosphate. The catalysed reaction is L-seryl-[protein] + UTP = O-(5'-uridylyl)-L-seryl-[protein] + diphosphate. It catalyses the reaction L-tyrosyl-[protein] + UTP = O-(5'-uridylyl)-L-tyrosyl-[protein] + diphosphate. In terms of biological role, nucleotidyltransferase involved in the post-translational modification of proteins. It can catalyze the addition of adenosine monophosphate (AMP) or uridine monophosphate (UMP) to a protein, resulting in modifications known as AMPylation and UMPylation. The polypeptide is Protein nucleotidyltransferase YdiU (Bacillus cereus (strain ATCC 14579 / DSM 31 / CCUG 7414 / JCM 2152 / NBRC 15305 / NCIMB 9373 / NCTC 2599 / NRRL B-3711)).